Reading from the N-terminus, the 247-residue chain is Adenosylcobinamide-GDP ribazoletransferase (247 aa).

5 consecutive transmembrane segments (helical) span residues 34-54, 59-79, 113-133, 138-158, and 194-214; these read IITFPLIGLLLGAISGLVFMV, CGVPLAALFSVLVLALMTGGF, GGLALIFVVLAKILVLSELAL, ILASLAAACAVSRGTAALLMY, and VLLPGMHGVAAMVVTMVAIFI.

It belongs to the CobS family. It depends on Mg(2+) as a cofactor.

The protein localises to the cell inner membrane. It carries out the reaction alpha-ribazole + adenosylcob(III)inamide-GDP = adenosylcob(III)alamin + GMP + H(+). It catalyses the reaction alpha-ribazole 5'-phosphate + adenosylcob(III)inamide-GDP = adenosylcob(III)alamin 5'-phosphate + GMP + H(+). Its pathway is cofactor biosynthesis; adenosylcobalamin biosynthesis; adenosylcobalamin from cob(II)yrinate a,c-diamide: step 7/7. In terms of biological role, joins adenosylcobinamide-GDP and alpha-ribazole to generate adenosylcobalamin (Ado-cobalamin). Also synthesizes adenosylcobalamin 5'-phosphate from adenosylcobinamide-GDP and alpha-ribazole 5'-phosphate. This chain is Adenosylcobinamide-GDP ribazoletransferase, found in Escherichia coli (strain 55989 / EAEC).